The primary structure comprises 699 residues: Elongation factor G (699 aa).

The tr-type G domain occupies 8 to 283; sequence EHIRNIGICA…AVVDFLPSPI (276 aa). Residues 17–24, 81–85, and 135–138 contribute to the GTP site; these read AHIDAGKT, DTPGH, and NKMD.

The protein belongs to the TRAFAC class translation factor GTPase superfamily. Classic translation factor GTPase family. EF-G/EF-2 subfamily.

It is found in the cytoplasm. Functionally, catalyzes the GTP-dependent ribosomal translocation step during translation elongation. During this step, the ribosome changes from the pre-translocational (PRE) to the post-translocational (POST) state as the newly formed A-site-bound peptidyl-tRNA and P-site-bound deacylated tRNA move to the P and E sites, respectively. Catalyzes the coordinated movement of the two tRNA molecules, the mRNA and conformational changes in the ribosome. The sequence is that of Elongation factor G from Rickettsia felis (strain ATCC VR-1525 / URRWXCal2) (Rickettsia azadi).